We begin with the raw amino-acid sequence, 455 residues long: Bifunctional protein GlmU (455 aa).

Residues 1-226 form a pyrophosphorylase region; sequence MALNVVILAA…AIEVEGANNR (226 aa). Residues 8-11, K22, Q73, 78-79, 100-102, G137, E151, N166, and N224 each bind UDP-N-acetyl-alpha-D-glucosamine; these read LAAG, GT, and YGD. A Mg(2+)-binding site is contributed by D102. N224 is a Mg(2+) binding site. The segment at 227–247 is linker; sequence VQLAQLERAYQARAAEKLMLE. The interval 248–455 is N-acetyltransferase; the sequence is GANLRDPARL…WARPVKKPKS (208 aa). UDP-N-acetyl-alpha-D-glucosamine-binding residues include R330 and K348. H360 serves as the catalytic Proton acceptor. Y363 and N374 together coordinate UDP-N-acetyl-alpha-D-glucosamine. Residues A377, 383–384, S402, A420, and R437 each bind acetyl-CoA; that span reads NY.

It in the N-terminal section; belongs to the N-acetylglucosamine-1-phosphate uridyltransferase family. This sequence in the C-terminal section; belongs to the transferase hexapeptide repeat family. In terms of assembly, homotrimer. Requires Mg(2+) as cofactor.

Its subcellular location is the cytoplasm. The enzyme catalyses alpha-D-glucosamine 1-phosphate + acetyl-CoA = N-acetyl-alpha-D-glucosamine 1-phosphate + CoA + H(+). It catalyses the reaction N-acetyl-alpha-D-glucosamine 1-phosphate + UTP + H(+) = UDP-N-acetyl-alpha-D-glucosamine + diphosphate. It participates in nucleotide-sugar biosynthesis; UDP-N-acetyl-alpha-D-glucosamine biosynthesis; N-acetyl-alpha-D-glucosamine 1-phosphate from alpha-D-glucosamine 6-phosphate (route II): step 2/2. The protein operates within nucleotide-sugar biosynthesis; UDP-N-acetyl-alpha-D-glucosamine biosynthesis; UDP-N-acetyl-alpha-D-glucosamine from N-acetyl-alpha-D-glucosamine 1-phosphate: step 1/1. It functions in the pathway bacterial outer membrane biogenesis; LPS lipid A biosynthesis. In terms of biological role, catalyzes the last two sequential reactions in the de novo biosynthetic pathway for UDP-N-acetylglucosamine (UDP-GlcNAc). The C-terminal domain catalyzes the transfer of acetyl group from acetyl coenzyme A to glucosamine-1-phosphate (GlcN-1-P) to produce N-acetylglucosamine-1-phosphate (GlcNAc-1-P), which is converted into UDP-GlcNAc by the transfer of uridine 5-monophosphate (from uridine 5-triphosphate), a reaction catalyzed by the N-terminal domain. This chain is Bifunctional protein GlmU, found in Shewanella sediminis (strain HAW-EB3).